A 203-amino-acid chain; its full sequence is Holliday junction branch migration complex subunit RuvA (203 aa).

Residues 1–64 (MIGRLRGIIL…EDAQLLYGFN (64 aa)) are domain I. The tract at residues 65–142 (NKQERTLFKE…KGLHGDLFTP (78 aa)) is domain II. The interval 143–154 (AVDLVLTSPASP) is flexible linker. A domain III region spans residues 155–203 (GSEDAEQEAVAALVALGYKPQEASRMVSKIARPDASSETLIRDALRAAL).

The protein belongs to the RuvA family. As to quaternary structure, homotetramer. Forms an RuvA(8)-RuvB(12)-Holliday junction (HJ) complex. HJ DNA is sandwiched between 2 RuvA tetramers; dsDNA enters through RuvA and exits via RuvB. An RuvB hexamer assembles on each DNA strand where it exits the tetramer. Each RuvB hexamer is contacted by two RuvA subunits (via domain III) on 2 adjacent RuvB subunits; this complex drives branch migration. In the full resolvosome a probable DNA-RuvA(4)-RuvB(12)-RuvC(2) complex forms which resolves the HJ.

Its subcellular location is the cytoplasm. The RuvA-RuvB-RuvC complex processes Holliday junction (HJ) DNA during genetic recombination and DNA repair, while the RuvA-RuvB complex plays an important role in the rescue of blocked DNA replication forks via replication fork reversal (RFR). RuvA specifically binds to HJ cruciform DNA, conferring on it an open structure. The RuvB hexamer acts as an ATP-dependent pump, pulling dsDNA into and through the RuvAB complex. HJ branch migration allows RuvC to scan DNA until it finds its consensus sequence, where it cleaves and resolves the cruciform DNA. This is Holliday junction branch migration complex subunit RuvA from Salmonella schwarzengrund (strain CVM19633).